The following is a 115-amino-acid chain: DNA-directed RNA polymerase II subunit RPB11-b2 (115 aa).

It belongs to the archaeal Rpo11/eukaryotic RPB11/RPC19 RNA polymerase subunit family. As to quaternary structure, component of the RNA polymerase II (Pol II) complex consisting of 12 subunits.

The protein localises to the nucleus. Functionally, DNA-dependent RNA polymerase catalyzes the transcription of DNA into RNA using the four ribonucleoside triphosphates as substrates. Component of RNA polymerase II which synthesizes mRNA precursors and many functional non-coding RNAs. Pol II is the central component of the basal RNA polymerase II transcription machinery. It is composed of mobile elements that move relative to each other. RPB11 is part of the core element with the central large cleft. This Homo sapiens (Human) protein is DNA-directed RNA polymerase II subunit RPB11-b2 (POLR2J3).